Here is a 318-residue protein sequence, read N- to C-terminus: Protein LplB (318 aa).

The next 6 helical transmembrane spans lie at 35-55 (LIPG…GVLI), 94-114 (LMLA…LALL), 130-150 (FIYV…FVFF), 182-202 (IVMQ…LAAL), 236-256 (IIVL…EQVY), and 289-309 (AVGL…NYIA). The region spanning 90 to 305 (LRNTLMLASL…VVGIILIFGA (216 aa)) is the ABC transmembrane type-1 domain.

This sequence belongs to the binding-protein-dependent transport system permease family. MalFG subfamily.

The protein resides in the cell membrane. The chain is Protein LplB (lplB) from Bacillus subtilis (strain 168).